A 588-amino-acid polypeptide reads, in one-letter code: ATP-dependent lipid A-core flippase (588 aa).

Transmembrane regions (helical) follow at residues 23-43, 56-76, 141-161, 162-182, 257-277, and 278-298; these read FWPV…IDAG, FITI…IGIT, DALT…TVMM, VICW…GIIV, LVIA…STVI, and TISA…IKPM. In terms of domain architecture, ABC transmembrane type-1 spans 28–310; the sequence is LLGVLANILY…LTTLNATIQR (283 aa). An ABC transporter domain is found at 342-576; sequence IEFKHVYHAY…DGHYAQLYKV (235 aa). Position 375–382 (375–382) interacts with ATP; that stretch reads GHSGSGKT.

The protein belongs to the ABC transporter superfamily. Lipid exporter (TC 3.A.1.106) family. In terms of assembly, homodimer.

The protein localises to the cell inner membrane. The catalysed reaction is ATP + H2O + lipid A-core oligosaccharideSide 1 = ADP + phosphate + lipid A-core oligosaccharideSide 2.. Involved in lipopolysaccharide (LPS) biosynthesis. Translocates lipid A-core from the inner to the outer leaflet of the inner membrane. Transmembrane domains (TMD) form a pore in the inner membrane and the ATP-binding domain (NBD) is responsible for energy generation. This is ATP-dependent lipid A-core flippase from Legionella pneumophila (strain Lens).